We begin with the raw amino-acid sequence, 333 residues long: Mevalonate kinase (333 aa).

109 to 119 (PVGAGLGSSAA) lines the ATP pocket. Residue D160 is the Proton acceptor of the active site.

The protein belongs to the GHMP kinase family. Mevalonate kinase subfamily. In terms of assembly, homodimer. Requires Mg(2+) as cofactor.

It is found in the cytoplasm. It catalyses the reaction (R)-mevalonate + ATP = (R)-5-phosphomevalonate + ADP + H(+). It participates in isoprenoid biosynthesis; isopentenyl diphosphate biosynthesis via mevalonate pathway; isopentenyl diphosphate from (R)-mevalonate: step 1/3. Its function is as follows. Catalyzes the phosphorylation of (R)-mevalonate (MVA) to (R)-mevalonate 5-phosphate (MVAP). Functions in the mevalonate (MVA) pathway leading to isopentenyl diphosphate (IPP), a key precursor for the biosynthesis of isoprenoid compounds such as archaeal membrane lipids. In Thermococcus sibiricus (strain DSM 12597 / MM 739), this protein is Mevalonate kinase.